The chain runs to 184 residues: GTP cyclohydrolase 1 (184 aa).

Residues cysteine 74, histidine 77, and cysteine 145 each contribute to the Zn(2+) site.

The protein belongs to the GTP cyclohydrolase I family. As to quaternary structure, toroid-shaped homodecamer, composed of two pentamers of five dimers.

It carries out the reaction GTP + H2O = 7,8-dihydroneopterin 3'-triphosphate + formate + H(+). It functions in the pathway cofactor biosynthesis; 7,8-dihydroneopterin triphosphate biosynthesis; 7,8-dihydroneopterin triphosphate from GTP: step 1/1. The protein is GTP cyclohydrolase 1 (folE) of Aquifex aeolicus (strain VF5).